Consider the following 402-residue polypeptide: Type II NADH:quinone oxidoreductase (402 aa).

Residues 12-16, 39-40, and Val83 each bind FAD; these read GAGYA and NK. Glu172 is a catalytic residue. Residues Asp302, 319–320, and Lys379 each bind FAD; that span reads AQ.

It belongs to the NADH dehydrogenase family. The cofactor is FAD.

It is found in the cell membrane. The catalysed reaction is a quinone + NADH + H(+) = a quinol + NAD(+). Alternative, nonproton pumping NADH:quinone oxidoreductase that delivers electrons to the respiratory chain by oxidation of NADH and reduction of quinones, and contributes to the regeneration of NAD(+). This Staphylococcus aureus (strain MSSA476) protein is Type II NADH:quinone oxidoreductase.